A 371-amino-acid polypeptide reads, in one-letter code: Queuine tRNA-ribosyltransferase (371 aa).

The active-site Proton acceptor is the Asp-89. Residues 89 to 93 (DSGGF), Asp-143, Gln-185, and Gly-212 contribute to the substrate site. The RNA binding stretch occupies residues 243-249 (GVGKPED). The active-site Nucleophile is the Asp-262. The tract at residues 267 to 271 (TRNAR) is RNA binding; important for wobble base 34 recognition. Zn(2+) is bound by residues Cys-300, Cys-302, Cys-305, and His-331.

This sequence belongs to the queuine tRNA-ribosyltransferase family. Homodimer. Within each dimer, one monomer is responsible for RNA recognition and catalysis, while the other monomer binds to the replacement base PreQ1. Zn(2+) is required as a cofactor.

The enzyme catalyses 7-aminomethyl-7-carbaguanine + guanosine(34) in tRNA = 7-aminomethyl-7-carbaguanosine(34) in tRNA + guanine. It functions in the pathway tRNA modification; tRNA-queuosine biosynthesis. In terms of biological role, catalyzes the base-exchange of a guanine (G) residue with the queuine precursor 7-aminomethyl-7-deazaguanine (PreQ1) at position 34 (anticodon wobble position) in tRNAs with GU(N) anticodons (tRNA-Asp, -Asn, -His and -Tyr). Catalysis occurs through a double-displacement mechanism. The nucleophile active site attacks the C1' of nucleotide 34 to detach the guanine base from the RNA, forming a covalent enzyme-RNA intermediate. The proton acceptor active site deprotonates the incoming PreQ1, allowing a nucleophilic attack on the C1' of the ribose to form the product. After dissociation, two additional enzymatic reactions on the tRNA convert PreQ1 to queuine (Q), resulting in the hypermodified nucleoside queuosine (7-(((4,5-cis-dihydroxy-2-cyclopenten-1-yl)amino)methyl)-7-deazaguanosine). The protein is Queuine tRNA-ribosyltransferase of Pseudomonas syringae pv. tomato (strain ATCC BAA-871 / DC3000).